A 91-amino-acid polypeptide reads, in one-letter code: Potassium channel toxin MeuTXK-beta-1 (91 aa).

The signal sequence occupies residues 1 to 19 (MQRNLVVLLFLGMVALSSC). The region spanning 54-91 (QFGCPAYQGYCDDHCQDIEKKEGFCHGFKCKCGIPMGF) is the BetaSPN-type CS-alpha/beta domain. 3 cysteine pairs are disulfide-bonded: Cys57–Cys78, Cys64–Cys83, and Cys68–Cys85.

In terms of tissue distribution, expressed by the venom gland.

Its subcellular location is the secreted. In terms of biological role, has a low affinity binding to potassium channels of rat brain synaptosomes. Displays weak antibacterial activity against Stenotrophomonas sp. Strongly inhibits the development of the Plasmodium berghei ookinetes. Displays slight hemolytic effect on mouse erythrocytes. Induces cytolysis on Xenopus oocytes at high concentrations. Is not toxic towards mice and towards the insect Tenebrio molitor. In Mesobuthus eupeus (Lesser Asian scorpion), this protein is Potassium channel toxin MeuTXK-beta-1.